A 1157-amino-acid polypeptide reads, in one-letter code: Probable ATP-dependent RNA helicase DHX37 (1157 aa).

Over residues 1–10 (MGKLRRRYNI) the composition is skewed to basic residues. Disordered stretches follow at residues 1–77 (MGKL…KKEK) and 116–225 (TSKL…AAPP). The segment covering 21–30 (SKGPPEPPPV) has biased composition (pro residues). Residues 159-184 (AEEEEEEEEESESELEEESELDEDPA) show a composition bias toward acidic residues. Composition is skewed to pro residues over residues 198–208 (PLPPAPAPSSQ) and 216–225 (VPPPPAAAPP). The region spanning 262-429 (MEAVAEHPIV…PRLFAKPPPV (168 aa)) is the Helicase ATP-binding domain. Residue 275–282 (GETGSGKT) participates in ATP binding. The short motif at 372–375 (DEAH) is the DEAH box element. Residues 459-716 (KVCKIHRMLP…DLILQMKALN (258 aa)) enclose the Helicase C-terminal domain. 2 disordered regions span residues 494-523 (PPSRARPQEKDDDQKDSVEEMRKFKKSRAR) and 542-584 (VLPA…QPDA). Residues 499 to 515 (RPQEKDDDQKDSVEEMR) show a composition bias toward basic and acidic residues. Residues 547–571 (EGDEDREAEVDEEEGALDSDLDLDL) are compositionally biased toward acidic residues.

The protein belongs to the DEAD box helicase family. DEAH subfamily. Part of the small subunit (SSU) processome, composed of more than 70 proteins and the RNA chaperone small nucleolar RNA (snoRNA) U3. Interacts with UTP14A. Expressed in the fallopian tube, ovary, uterus and testis. Also expressed in the brain.

The protein localises to the nucleus. It is found in the nucleolus. The protein resides in the cytoplasm. Its subcellular location is the nucleus membrane. The catalysed reaction is ATP + H2O = ADP + phosphate + H(+). In terms of biological role, ATP-binding RNA helicase that plays a role in maturation of the small ribosomal subunit in ribosome biogenesis. Required for the release of the U3 snoRNP from pre-ribosomal particles. Part of the small subunit (SSU) processome, first precursor of the small eukaryotic ribosomal subunit. During the assembly of the SSU processome in the nucleolus, many ribosome biogenesis factors, an RNA chaperone and ribosomal proteins associate with the nascent pre-rRNA and work in concert to generate RNA folding, modifications, rearrangements and cleavage as well as targeted degradation of pre-ribosomal RNA by the RNA exosome. Plays a role in early testis development. Probably also plays a role in brain development. The polypeptide is Probable ATP-dependent RNA helicase DHX37 (Homo sapiens (Human)).